Reading from the N-terminus, the 163-residue chain is SsrA-binding protein (163 aa).

A compositionally biased stretch (basic and acidic residues) spans 138–157; that stretch reads EDRRGAIAERESKREMDRAL. The tract at residues 138–163 is disordered; that stretch reads EDRRGAIAERESKREMDRALARGRRR.

Belongs to the SmpB family.

Its subcellular location is the cytoplasm. Its function is as follows. Required for rescue of stalled ribosomes mediated by trans-translation. Binds to transfer-messenger RNA (tmRNA), required for stable association of tmRNA with ribosomes. tmRNA and SmpB together mimic tRNA shape, replacing the anticodon stem-loop with SmpB. tmRNA is encoded by the ssrA gene; the 2 termini fold to resemble tRNA(Ala) and it encodes a 'tag peptide', a short internal open reading frame. During trans-translation Ala-aminoacylated tmRNA acts like a tRNA, entering the A-site of stalled ribosomes, displacing the stalled mRNA. The ribosome then switches to translate the ORF on the tmRNA; the nascent peptide is terminated with the 'tag peptide' encoded by the tmRNA and targeted for degradation. The ribosome is freed to recommence translation, which seems to be the essential function of trans-translation. The polypeptide is SsrA-binding protein (Anaeromyxobacter dehalogenans (strain 2CP-1 / ATCC BAA-258)).